A 486-amino-acid chain; its full sequence is ATP synthase subunit beta (486 aa).

Residue 164-171 (GGAGVGKT) participates in ATP binding.

The protein belongs to the ATPase alpha/beta chains family. In terms of assembly, F-type ATPases have 2 components, CF(1) - the catalytic core - and CF(0) - the membrane proton channel. CF(1) has five subunits: alpha(3), beta(3), gamma(1), delta(1), epsilon(1). CF(0) has four main subunits: a(1), b(1), b'(1) and c(9-12).

The protein localises to the cellular thylakoid membrane. The catalysed reaction is ATP + H2O + 4 H(+)(in) = ADP + phosphate + 5 H(+)(out). Produces ATP from ADP in the presence of a proton gradient across the membrane. The catalytic sites are hosted primarily by the beta subunits. The chain is ATP synthase subunit beta from Prochlorococcus marinus (strain MIT 9301).